A 242-amino-acid polypeptide reads, in one-letter code: Protein HTATIP2 (242 aa).

Residue Ala-2 is modified to N-acetylalanine. The interval 2 to 25 (ADKEALPKLREDFKMQNKSVFILG) is required for interaction with elongation factor EEF1A1. NADPH-binding residues include Ser-27, Gly-28, Glu-29, Thr-30, Arg-52, Arg-53, Leu-92, Gly-93, Tyr-143, Lys-147, Leu-170, and Arg-178. The active-site Proton acceptor is the Tyr-143. Residue Lys-147 is part of the active site.

Monomer. Forms homodimers during oxidative stress. Interacts (via N-terminus) with elongation factor EEF1A1 (via middle-region); the interaction is direct and competes with EEF1A1 binding to guanyl-nucleotide exchange factor EEF1B2, thereby inhibiting GDP for GTP exchange and reactivation of EEF1A1. Interacts with nuclear transport receptors XPO4, IPO5/RANBP5, IPO7, IPO9 and KPNB1 as well as GCN1L1/GCN1 and LRPPRC probably through their HEAT repeats. Binds NCOA5/CIA.

It is found in the cytoplasm. Represses translation by preventing reactivation of elongation factor eEF1A. May also inhibit nuclear import by competing with nuclear import substrates for binding to a subset of nuclear transport receptors. Has additionally been proposed to act as a redox sensor involved in cellular oxidative stress surveillance. In Mus musculus (Mouse), this protein is Protein HTATIP2.